The sequence spans 92 residues: Small ribosomal subunit protein uS19c (92 aa).

Belongs to the universal ribosomal protein uS19 family.

The protein resides in the plastid. It localises to the chloroplast. Protein S19 forms a complex with S13 that binds strongly to the 16S ribosomal RNA. The polypeptide is Small ribosomal subunit protein uS19c (Staurastrum punctulatum (Green alga)).